A 1608-amino-acid chain; its full sequence is Hemolysin (1608 aa).

The N-terminal stretch at 1–30 (MKNNNFRLSAAGKLAAALAIILAASAGAYA) is a signal peptide. Disordered stretches follow at residues 296–315 (SRVD…QNYR), 452–488 (KSSE…LRSE), 716–737 (EHTR…LSGG), 971–1030 (AVNL…SASQ), 1168–1199 (AEST…TGGN), and 1437–1469 (PQQD…QGPL). 2 stretches are compositionally biased toward polar residues: residues 303–313 (SNKNGGDNYQN) and 460–474 (RNHT…WSNS). 2 stretches are compositionally biased toward basic and acidic residues: residues 478–488 (ESLKASELRSE) and 716–726 (EHTRDSEKTTR). The segment covering 727–736 (TENSASSLSG) has biased composition (polar residues). Positions 977–996 (DSHRSEAAANRQDEQSRDTR) are enriched in basic and acidic residues. The segment covering 1021-1030 (TQRSNSSASQ) has biased composition (polar residues).

The protein localises to the cell outer membrane. Functionally, bacterial hemolysins are exotoxins that attack blood cell membranes and cause cell rupture by mechanisms not clearly defined. In terms of biological role, cell-bound hemolysin, which releases heme-iron from erythrocytes by interaction with the erythrocyte membrane. ShlA requires ShlB function. This Serratia marcescens protein is Hemolysin (shlA).